The chain runs to 222 residues: ATP-dependent Clp protease proteolytic subunit (222 aa).

S125 functions as the Nucleophile in the catalytic mechanism. H150 is an active-site residue.

It belongs to the peptidase S14 family. In terms of assembly, fourteen ClpP subunits assemble into 2 heptameric rings which stack back to back to give a disk-like structure with a central cavity, resembling the structure of eukaryotic proteasomes.

It is found in the cytoplasm. The catalysed reaction is Hydrolysis of proteins to small peptides in the presence of ATP and magnesium. alpha-casein is the usual test substrate. In the absence of ATP, only oligopeptides shorter than five residues are hydrolyzed (such as succinyl-Leu-Tyr-|-NHMec, and Leu-Tyr-Leu-|-Tyr-Trp, in which cleavage of the -Tyr-|-Leu- and -Tyr-|-Trp bonds also occurs).. Functionally, cleaves peptides in various proteins in a process that requires ATP hydrolysis. Has a chymotrypsin-like activity. Plays a major role in the degradation of misfolded proteins. In Porphyromonas gingivalis (strain ATCC BAA-308 / W83), this protein is ATP-dependent Clp protease proteolytic subunit.